The following is a 428-amino-acid chain: Glutamyl-tRNA reductase (428 aa).

Substrate-binding positions include 49–52 (TCNR), S107, 112–114 (EPQ), and Q118. The Nucleophile role is filled by C50. 187-192 (GAGETI) provides a ligand contact to NADP(+).

This sequence belongs to the glutamyl-tRNA reductase family. As to quaternary structure, homodimer.

The enzyme catalyses (S)-4-amino-5-oxopentanoate + tRNA(Glu) + NADP(+) = L-glutamyl-tRNA(Glu) + NADPH + H(+). The protein operates within porphyrin-containing compound metabolism; protoporphyrin-IX biosynthesis; 5-aminolevulinate from L-glutamyl-tRNA(Glu): step 1/2. In terms of biological role, catalyzes the NADPH-dependent reduction of glutamyl-tRNA(Glu) to glutamate 1-semialdehyde (GSA). The sequence is that of Glutamyl-tRNA reductase from Pseudomonas fluorescens (strain Pf0-1).